The sequence spans 74 residues: Large ribosomal subunit protein uL29 (74 aa).

The protein belongs to the universal ribosomal protein uL29 family.

The chain is Large ribosomal subunit protein uL29 from Nostoc sp. (strain PCC 7120 / SAG 25.82 / UTEX 2576).